A 985-amino-acid chain; its full sequence is DNA repair protein REV1 (985 aa).

The BRCT domain maps to 161 to 249; the sequence is QSSKIFKNCV…RLLPWQNYSL (89 aa). The interval 319-329 is interaction with target DNA; that stretch reads YFAHSRLHHLS. Residues arginine 324 and 362–366 contribute to the dCTP site; that span reads DFDCF. In terms of domain architecture, UmuC spans 358–554; the sequence is IFHIDFDCFF…FKLDDLPGVG (197 aa). Positions 362 and 363 each coordinate Mg(2+). Positions 395–397 are interaction with target DNA; the sequence is TKN. DCTP contacts are provided by residues 402-408, asparagine 414, and aspartate 467; that span reads SCNYVAR. Mg(2+)-binding residues include aspartate 467 and glutamate 468. Interaction with target DNA stretches follow at residues 554-557 and 620-628; these read GHST and RKSLSIDIN.

It belongs to the DNA polymerase type-Y family. Interacts with REV7. Requires Mg(2+) as cofactor.

It is found in the nucleus. Its subcellular location is the mitochondrion. Its function is as follows. Deoxycytidyl transferase involved in DNA repair. Transfers a dCMP residue from dCTP to the 3'-end of a DNA primer in a template-dependent reaction. May assist in the first step in the bypass of abasic lesions by the insertion of a nucleotide opposite the lesion. Required for normal induction of mutations by physical and chemical agents. Involved in mitochondrial DNA mutagenesis. This is DNA repair protein REV1 (REV1) from Saccharomyces cerevisiae (strain ATCC 204508 / S288c) (Baker's yeast).